The primary structure comprises 626 residues: Chaperone protein HtpG (626 aa).

The tract at residues 1–339 is a; substrate-binding; that stretch reads MSQNQETRGF…SNDLPLNVSR (339 aa). A b region spans residues 340–555; that stretch reads EILQDNKITA…NDQMTTQMAK (216 aa). The segment at 556 to 626 is c; the sequence is LFAAAGQPVP…FIKRINKLLG (71 aa).

It belongs to the heat shock protein 90 family. In terms of assembly, homodimer.

It is found in the cytoplasm. In terms of biological role, molecular chaperone. Has ATPase activity. The protein is Chaperone protein HtpG of Haemophilus influenzae (strain 86-028NP).